The primary structure comprises 674 residues: MNRINILNADTANKIAAGEVVERPSSVVKELVENSLDAGAKNITIEIQNGGESLIKIIDDGSGVHPEDVEKAFNPHATSKIKDTYDIFSINTLGFRGEALPSIASIARVDFKSKVSDFDMGKELVISGGEKESLTDCSMNRGTQIEVRDLFFNVPARKKFLKTTARESALINDLVNRISLANPDVSFKLFNNNKKILNTYGNGKLIDVIRTIYGKSTAENLIYFEEHKDTASVYGFIGNDTLARASRNNQSLFVNKRYVKNRSLTVAVENAFRSFNVTGKFPFFVLFIDTYPELIDVNIHPTKSEIKFKDERFIFKVVFDAVHSAMREYVKDTFTLPEEEEKKFEALKEEVIQESLDEEISTLEKLKENINYKVSEDRKKEEIYSYNPSKDYEAKTEVNIPVDFLSKENQEESFSINNSLENNNFKEGSAKREISYDPILIKNELKDKVSESTSESLERSDYKCNKNEYGNSIEEIIYREAKFPKLRVIGQFNKTYILAEYDSTLYLIDQHAAHEKILFEKYSSDIAKKRVEIQPLMIPLVVTLPTEDYLYYDENKEIFEKAGFKISDFGDNSIRIEEVPYFLDKLNPTELITSMINNLKKMGTGETVEVKYNKIASMSCRAAVKANDVLSILEMENLIEDLRYINDPFHCPHGRPTIIKFTSYELDKKFKRIT.

Belongs to the DNA mismatch repair MutL/HexB family.

This protein is involved in the repair of mismatches in DNA. It is required for dam-dependent methyl-directed DNA mismatch repair. May act as a 'molecular matchmaker', a protein that promotes the formation of a stable complex between two or more DNA-binding proteins in an ATP-dependent manner without itself being part of a final effector complex. The chain is DNA mismatch repair protein MutL from Clostridium perfringens (strain ATCC 13124 / DSM 756 / JCM 1290 / NCIMB 6125 / NCTC 8237 / Type A).